Consider the following 134-residue polypeptide: Small ribosomal subunit protein uS11 (134 aa).

The protein belongs to the universal ribosomal protein uS11 family. Part of the 30S ribosomal subunit. Interacts with proteins S7 and S18. Binds to IF-3.

Its function is as follows. Located on the platform of the 30S subunit, it bridges several disparate RNA helices of the 16S rRNA. Forms part of the Shine-Dalgarno cleft in the 70S ribosome. The polypeptide is Small ribosomal subunit protein uS11 (Corynebacterium diphtheriae (strain ATCC 700971 / NCTC 13129 / Biotype gravis)).